Here is a 128-residue protein sequence, read N- to C-terminus: Cytochrome b (128 aa).

3 helical membrane passes run 25–45 (FGSMLLSCLTIQIITGFFLAI), 69–90 (WIMQNTHAIGXSLFFICIYIHI), and 105–125 (WLSGTTLLITLMATASXXMCY). Heme b contacts are provided by histidine 75 and histidine 89. A ubiquinone is bound at residue histidine 126.

It belongs to the cytochrome b family. As to quaternary structure, the cytochrome bc1 complex contains 3 respiratory subunits (MT-CYB, CYC1 and UQCRFS1), 2 core proteins (UQCRC1 and UQCRC2) and probably 6 low-molecular weight proteins. Heme b is required as a cofactor.

The protein resides in the mitochondrion inner membrane. Component of the ubiquinol-cytochrome c reductase complex (complex III or cytochrome b-c1 complex) that is part of the mitochondrial respiratory chain. The b-c1 complex mediates electron transfer from ubiquinol to cytochrome c. Contributes to the generation of a proton gradient across the mitochondrial membrane that is then used for ATP synthesis. The chain is Cytochrome b (MT-CYB) from Crotalus viridis viridis (Prairie rattlesnake).